The sequence spans 98 residues: ATP-dependent Clp protease adapter protein ClpS (98 aa).

The protein belongs to the ClpS family. In terms of assembly, binds to the N-terminal domain of the chaperone ClpA.

In terms of biological role, involved in the modulation of the specificity of the ClpAP-mediated ATP-dependent protein degradation. The sequence is that of ATP-dependent Clp protease adapter protein ClpS from Synechocystis sp. (strain ATCC 27184 / PCC 6803 / Kazusa).